Consider the following 547-residue polypeptide: Ribosomal lysine N-methyltransferase set10 (547 aa).

In terms of domain architecture, SET spans 17–235; that stretch reads KSVEFIQSRD…KGNQLFNNYG (219 aa). S-adenosyl-L-methionine is bound at residue Y234.

This sequence belongs to the class V-like SAM-binding methyltransferase superfamily. RKM1 family.

Its subcellular location is the cytoplasm. It is found in the nucleus. Functionally, S-adenosyl-L-methionine-dependent protein-lysine N-methyltransferase that methylates ribosomal protein L23 (rpl23a and rpl23b). This Schizosaccharomyces pombe (strain 972 / ATCC 24843) (Fission yeast) protein is Ribosomal lysine N-methyltransferase set10 (set10).